The following is a 234-amino-acid chain: Sugar fermentation stimulation protein homolog (234 aa).

The protein belongs to the SfsA family.

The sequence is that of Sugar fermentation stimulation protein homolog from Pectobacterium carotovorum subsp. carotovorum (strain PC1).